The sequence spans 253 residues: Spermatogenesis-associated protein 9 (253 aa).

The chain crosses the membrane as a helical span at residues Leu144–Leu166. Positions Ala210–Lys228 are enriched in basic and acidic residues. The interval Ala210–Ala231 is disordered.

It is found in the membrane. Functionally, may play at role in testicular development/spermatogenesis and may be an important factor in male infertility. The protein is Spermatogenesis-associated protein 9 (SPATA9) of Bos taurus (Bovine).